Consider the following 1238-residue polypeptide: Erythroid differentiation-related factor 1 (1238 aa).

Disordered stretches follow at residues methionine 1–serine 38, glutamine 220–proline 268, proline 517–serine 561, and lysine 620–proline 647. Composition is skewed to low complexity over residues alanine 9–serine 38, serine 223–glutamate 241, and serine 253–serine 263. Positions asparagine 530–glutamate 547 are enriched in acidic residues. 2 TPR repeats span residues serine 693 to tyrosine 726 and alanine 914 to arginine 953.

It localises to the nucleus. Transcription factor involved in erythroid differentiation. Involved in transcriptional activation of the globin gene. The sequence is that of Erythroid differentiation-related factor 1 (EDRF1) from Homo sapiens (Human).